A 206-amino-acid chain; its full sequence is Imidazoleglycerol-phosphate dehydratase (206 aa).

It belongs to the imidazoleglycerol-phosphate dehydratase family.

The protein localises to the cytoplasm. The catalysed reaction is D-erythro-1-(imidazol-4-yl)glycerol 3-phosphate = 3-(imidazol-4-yl)-2-oxopropyl phosphate + H2O. It participates in amino-acid biosynthesis; L-histidine biosynthesis; L-histidine from 5-phospho-alpha-D-ribose 1-diphosphate: step 6/9. This chain is Imidazoleglycerol-phosphate dehydratase, found in Leptospira borgpetersenii serovar Hardjo-bovis (strain JB197).